The chain runs to 257 residues: MTAFVPVSLPSTSALNDAYVKSQLTKWDLLRNLRCVAVRYTKYYHKLQGQELLADLFRDEKVQEAFQVLRKGGAWGQLGGPVTKVDATLLASSLTRMDLFDKLTETSPPIVRSNGDIGKCMEDNREGFQVSDQLRELILVEESEHAALFSEAERDELLWRLFEHVVLGGACCQFEDKVEPYVETSKRLYKELVCAQKDPATGKVQTVSAVYKINSIQGDSGPLELYPSRSRQNFCYAAVDPVRRIVKILYHAYVPYW.

It belongs to the CFAP300 family.

The protein localises to the cytoplasm. Its subcellular location is the cytoskeleton. It is found in the flagellum axoneme. Its function is as follows. Cilium- and flagellum-specific protein that plays a role in axonemal structure organization and motility. Plays a role in outer and inner dynein arm assembly. In Chlamydomonas reinhardtii (Chlamydomonas smithii), this protein is Cilia- and flagella-associated protein 300.